The following is a 158-amino-acid chain: Protein Smg homolog (158 aa).

It belongs to the Smg family.

The sequence is that of Protein Smg homolog from Coxiella burnetii (strain RSA 331 / Henzerling II).